The following is a 473-amino-acid chain: FAD-dependent monooxygenase ctvC (473 aa).

3 residues coordinate FAD: Glu-37, Ala-51, and Arg-110. The chain crosses the membrane as a helical span at residues 218–238; sequence IGPGFTFLIFPAAGDSLFWVL. FAD-binding residues include Asp-310 and Ala-323. An N-linked (GlcNAc...) asparagine glycan is attached at Asn-358. The chain crosses the membrane as a helical span at residues 451 to 471; sequence LVYCFGVVILLWISWAVFNVN.

Belongs to the paxM FAD-dependent monooxygenase family. FAD serves as cofactor.

The protein localises to the membrane. Its pathway is mycotoxin biosynthesis. FAD-dependent monooxygenase; part of the gene cluster that mediates the biosynthesis of citreoviridin, an inhibitor of the of F1-ATPase beta-subunit. The HR-PKS ctvA accepts acetyl-CoA as the starter unit and catalyzes eight iterations of malonyl-CoA extension and four iterations of SAM-dependent methylation at C4, C12, C14, and C16. The KR and DH domains selectively act on the first six iterations to generate the hexaene chain. In the last three iterations, the KR and DH domains terminate their functions to yield a beta,delta-diketo ester moiety, which then undergoes intramolecular cyclization to yield an alpha-pyrone intermediate. Subsequently, ctvB methylates the alpha-pyrone hydroxyl group to generate citreomontanin. In order to form the tetrahydrofuran ring with the correct stereochemistry, the terminal alkenes of citreomontanin need to undergo isomerization to yield a (17Z)-hexaene, a step that could be catalyzed by ctvC. The (17Z)-hexaene then undergoes bisepoxidation by ctvC to form a (17R,16R,15S,14R)-bisepoxide moiety. Lastly, ctvD acts as a regioselective hydrolase to form the tetrahydrofuran ring with the substituents in the correct absolute configuration, completing the biosynthesis of citreoviridin. The protein is FAD-dependent monooxygenase ctvC of Aspergillus terreus (strain NIH 2624 / FGSC A1156).